An 833-amino-acid polypeptide reads, in one-letter code: Leucine--tRNA ligase (833 aa).

A 'HIGH' region motif is present at residues 41–52 (PYPSGAGLHVGH). Residues 610 to 614 (KMSKS) carry the 'KMSKS' region motif. An ATP-binding site is contributed by lysine 613.

This sequence belongs to the class-I aminoacyl-tRNA synthetase family.

Its subcellular location is the cytoplasm. It carries out the reaction tRNA(Leu) + L-leucine + ATP = L-leucyl-tRNA(Leu) + AMP + diphosphate. This chain is Leucine--tRNA ligase, found in Streptococcus pneumoniae (strain 70585).